A 167-amino-acid chain; its full sequence is Transmembrane protein B169L (167 aa).

2 helical membrane-spanning segments follow: residues 28–48 (NPFI…FAIC) and 60–80 (TAIY…YVLN). Asn88 carries an N-linked (GlcNAc...) asparagine; by host glycan.

Belongs to the asfivirus B169L family.

The protein resides in the host membrane. The protein localises to the virion. In African swine fever virus (isolate Tick/Malawi/Lil 20-1/1983) (ASFV), this protein is Transmembrane protein B169L.